The sequence spans 666 residues: SNARE-interacting protein KEULE (666 aa).

The stretch at 340 to 377 (KNKAAQLQGKRDGAELSTRDLQKMVQALPQYSEQIDKL) forms a coiled coil. Residues 534 to 589 (KEDFPCMNDPSPSFHGSTSLSSAASSSQGQAAQSMRSRRTPTWAKPRGSDDGYSSD) form a disordered region. Positions 550–568 (STSLSSAASSSQGQAAQSM) are enriched in low complexity.

It belongs to the STXBP/unc-18/SEC1 family. In terms of assembly, binds the syntaxin KNOLLE. Interacts with SEC6. Expressed throughout the plant, both in mitotically active and quiescent cells. Enriched in dividing tissues.

Its subcellular location is the cytoplasm. It localises to the membrane. It is found in the cytoskeleton. The protein localises to the phragmoplast. Functionally, regulator of vesicle trafficking involved in cytokinesis and root hair development, but not required for cell elongation. The chain is SNARE-interacting protein KEULE (KEU) from Arabidopsis thaliana (Mouse-ear cress).